The primary structure comprises 356 residues: MKKILFTGGGTVGHVTLNLLLIPKFIKEGWQVHYIGDKNGIEYQEIQKSGLDVTFHSVATGKLRRYFSWQNLLDGFKVIWGIFQSLSIMLKVRPQALFSKGGFVSVPPVIAARLSGVPVYVHESDLSIGLANKIAYKCATKMYATFEQPSSLTKIEHVGAVTKVSGTKSDLPQELEEIRQYFDKELPTLLFVGGSAGAKVFNDFVSQNQATLTERYNVINLTGDASLDVLSDRLFRRAYVTDLYQPLMDLADVVVTRGGSNTIFELLAMAKLHIIVPLGREASRGDQIENADYFVKKGYAVKLEEEQLTLEGLEASVEQILRDKNTYYQAMKNSHEIKSVEDFYAVLKNDINKGKK.

UDP-N-acetyl-alpha-D-glucosamine is bound by residues S195 and Q287.

Belongs to the glycosyltransferase 28 family. MurG subfamily.

It is found in the cell membrane. The catalysed reaction is Mur2Ac(oyl-L-Ala-gamma-D-Glu-L-Lys-D-Ala-D-Ala)-di-trans,octa-cis-undecaprenyl diphosphate + UDP-N-acetyl-alpha-D-glucosamine = beta-D-GlcNAc-(1-&gt;4)-Mur2Ac(oyl-L-Ala-gamma-D-Glu-L-Lys-D-Ala-D-Ala)-di-trans,octa-cis-undecaprenyl diphosphate + UDP + H(+). Its pathway is cell wall biogenesis; peptidoglycan biosynthesis. Functionally, cell wall formation. Catalyzes the transfer of a GlcNAc subunit on undecaprenyl-pyrophosphoryl-MurNAc-pentapeptide (lipid intermediate I) to form undecaprenyl-pyrophosphoryl-MurNAc-(pentapeptide)GlcNAc (lipid intermediate II). The chain is UDP-N-acetylglucosamine--N-acetylmuramyl-(pentapeptide) pyrophosphoryl-undecaprenol N-acetylglucosamine transferase from Streptococcus gordonii (strain Challis / ATCC 35105 / BCRC 15272 / CH1 / DL1 / V288).